The chain runs to 624 residues: Chaperone protein HtpG (624 aa).

The segment at Met-1–Arg-336 is a; substrate-binding. The segment at Glu-337–Lys-552 is b. Residues Leu-553–Ala-624 are c.

Belongs to the heat shock protein 90 family. As to quaternary structure, homodimer.

It localises to the cytoplasm. Functionally, molecular chaperone. Has ATPase activity. The protein is Chaperone protein HtpG of Yersinia pestis bv. Antiqua (strain Antiqua).